The chain runs to 644 residues: MDDPEGTNGVGAGCTGWFEVEAVIERRTGDNISDDEDETADDSGTDLIEFIDDSVQSTTQAEAEAARALFNVQEGVDDINAVCALKRKFAACSESAVEDCVDRAANVCVSWKYKNKECTHRKRKIIELEDSGYGNTEVETEQMAHQVESQNGDADLNDSESSGVGASSDVSSETDVDSCNTVPLQNISNILHNSNTKATLLYKFKEAYGVSFMELVRPFKSDKTSCTDWCITGYGISPSVAESLKVLIKQHSIYTHLQCLTCDRGIILLLLIRFKCSKNRLTVAKLMSNLLSIPETCMIIEPPKLRSQACALYWFRTAMSNISDVQGTTPEWIDRLTVLQHSFNDDIFDLSEMIQWAYDNDITDDSDIAYKYAQLADVNSNAAAFLRSNAQAKIVKDCGVMCRHYKRAEKRGMTMGQWIQSRCEKTNDGGNWRPIVQFLRYQNIEFTAFLVAFKQFLQGVPKKSCMLLCGPANTGKSYFGMSLIHFLKGCIISYVNSKSHFWLQPLSDAKLGMIDDVTAISWTYIDDYMRNALDGNDISIDVKHRALVQLKCPPLIITSNTNAGKDSRWPYLHSRLTVFEFNNPFPFDANGNPVYKINDENWKSFFSRTWCKLGLIEEEDKENDGGNISTFKCSAGQNPRHIRS.

The short motif at 86–88 (KRK) is the Nuclear localization signal element. The interval 146 to 177 (QVESQNGDADLNDSESSGVGASSDVSSETDVD) is disordered. The span at 159 to 173 (SESSGVGASSDVSSE) shows a compositional bias: low complexity. The segment at 179–345 (CNTVPLQNIS…LTVLQHSFND (167 aa)) is DNA-binding region. Residues 444–594 (IEFTAFLVAF…FPFDANGNPV (151 aa)) enclose the SF3 helicase domain. 470-477 (GPANTGKS) is a binding site for ATP. A Glycyl lysine isopeptide (Lys-Gly) (interchain with G-Cter in SUMO) cross-link involves residue K551.

Belongs to the papillomaviridae E1 protein family. As to quaternary structure, can form hexamers. Interacts with E2 protein; this interaction increases E1 DNA binding specificity. Interacts with host DNA polymerase subunit POLA2. Interacts with host single stranded DNA-binding protein RPA1. Interacts with host TOP1; this interaction stimulates the enzymatic activity of TOP1. Post-translationally, phosphorylated. Sumoylated.

It is found in the host nucleus. It catalyses the reaction Couples ATP hydrolysis with the unwinding of duplex DNA by translocating in the 3'-5' direction.. The catalysed reaction is ATP + H2O = ADP + phosphate + H(+). ATP-dependent DNA 3'-5' helicase required for initiation of viral DNA replication. It forms a complex with the viral E2 protein. The E1-E2 complex binds to the replication origin which contains binding sites for both proteins. During the initial step, a dimer of E1 interacts with a dimer of protein E2 leading to a complex that binds the viral origin of replication with high specificity. Then, a second dimer of E1 displaces the E2 dimer in an ATP-dependent manner to form the E1 tetramer. Following this, two E1 monomers are added to each half of the site, which results in the formation of two E1 trimers on the viral ori. Subsequently, two hexamers will be created. The double hexamer acts as a bi-directional helicase machinery and unwinds the viral DNA and then recruits the host DNA polymerase to start replication. This Homo sapiens (Human) protein is Replication protein E1.